We begin with the raw amino-acid sequence, 465 residues long: Ribulose bisphosphate carboxylase large chain (465 aa).

An N6,N6,N6-trimethyllysine modification is found at Lys-4. Positions 113 and 163 each coordinate substrate. Lys-165 acts as the Proton acceptor in catalysis. Lys-167 provides a ligand contact to substrate. Positions 191, 193, and 194 each coordinate Mg(2+). Residue Lys-191 is modified to N6-carboxylysine. The active-site Proton acceptor is His-284. 3 residues coordinate substrate: Arg-285, His-317, and Ser-369.

This sequence belongs to the RuBisCO large chain family. Type I subfamily. Heterohexadecamer of 8 large chains and 8 small chains; disulfide-linked. The disulfide link is formed within the large subunit homodimers. Mg(2+) is required as a cofactor. Post-translationally, the disulfide bond which can form in the large chain dimeric partners within the hexadecamer appears to be associated with oxidative stress and protein turnover.

Its subcellular location is the plastid. The protein localises to the chloroplast. The enzyme catalyses 2 (2R)-3-phosphoglycerate + 2 H(+) = D-ribulose 1,5-bisphosphate + CO2 + H2O. It carries out the reaction D-ribulose 1,5-bisphosphate + O2 = 2-phosphoglycolate + (2R)-3-phosphoglycerate + 2 H(+). Functionally, ruBisCO catalyzes two reactions: the carboxylation of D-ribulose 1,5-bisphosphate, the primary event in carbon dioxide fixation, as well as the oxidative fragmentation of the pentose substrate in the photorespiration process. Both reactions occur simultaneously and in competition at the same active site. The polypeptide is Ribulose bisphosphate carboxylase large chain (Eucommia ulmoides (Hardy rubber tree)).